The following is a 346-amino-acid chain: Phosphate acyltransferase (346 aa).

It belongs to the PlsX family. Homodimer. Probably interacts with PlsY.

Its subcellular location is the cytoplasm. It carries out the reaction a fatty acyl-[ACP] + phosphate = an acyl phosphate + holo-[ACP]. It functions in the pathway lipid metabolism; phospholipid metabolism. Catalyzes the reversible formation of acyl-phosphate (acyl-PO(4)) from acyl-[acyl-carrier-protein] (acyl-ACP). This enzyme utilizes acyl-ACP as fatty acyl donor, but not acyl-CoA. The chain is Phosphate acyltransferase from Delftia acidovorans (strain DSM 14801 / SPH-1).